The primary structure comprises 156 residues: MDTVVKLNNIFSGLPKNKKSKVLGRGIGCGKGKTSGRGHKGQKARSGVSINGFEGGQQSIFTRLPKRGFNSLLKHRYSIVNLSTIQRLIDSKKIEDVSAITKEVLYNLGVISSIKEKIKILGNGKLNTAVAIEYDFISKSAESQVTLLSNVSASKE.

The tract at residues 29 to 48 (CGKGKTSGRGHKGQKARSGV) is disordered. A compositionally biased stretch (basic residues) spans 34 to 43 (TSGRGHKGQK).

This sequence belongs to the universal ribosomal protein uL15 family. As to quaternary structure, part of the 50S ribosomal subunit.

Functionally, binds to the 23S rRNA. In Ehrlichia chaffeensis (strain ATCC CRL-10679 / Arkansas), this protein is Large ribosomal subunit protein uL15.